A 143-amino-acid chain; its full sequence is Large-conductance mechanosensitive channel (143 aa).

2 helical membrane passes run 10–30 (FAVKGNVMDLAVGVIIGGAFS) and 89–109 (GSFITVAINFVILAFIIFLMV).

It belongs to the MscL family. In terms of assembly, homopentamer.

The protein localises to the cell inner membrane. Its function is as follows. Channel that opens in response to stretch forces in the membrane lipid bilayer. May participate in the regulation of osmotic pressure changes within the cell. This is Large-conductance mechanosensitive channel from Burkholderia cenocepacia (strain ATCC BAA-245 / DSM 16553 / LMG 16656 / NCTC 13227 / J2315 / CF5610) (Burkholderia cepacia (strain J2315)).